The following is a 299-amino-acid chain: Acetylglutamate kinase (299 aa).

Residues 70–71 (GG), Arg92, and Asn186 each bind substrate.

Belongs to the acetylglutamate kinase family. ArgB subfamily.

The protein localises to the cytoplasm. The catalysed reaction is N-acetyl-L-glutamate + ATP = N-acetyl-L-glutamyl 5-phosphate + ADP. Its pathway is amino-acid biosynthesis; L-arginine biosynthesis; N(2)-acetyl-L-ornithine from L-glutamate: step 2/4. Functionally, catalyzes the ATP-dependent phosphorylation of N-acetyl-L-glutamate. The polypeptide is Acetylglutamate kinase (Petrotoga mobilis (strain DSM 10674 / SJ95)).